We begin with the raw amino-acid sequence, 274 residues long: Urease accessory protein UreD (274 aa).

It belongs to the UreD family. UreD, UreF and UreG form a complex that acts as a GTP-hydrolysis-dependent molecular chaperone, activating the urease apoprotein by helping to assemble the nickel containing metallocenter of UreC. The UreE protein probably delivers the nickel.

Its subcellular location is the cytoplasm. Its function is as follows. Required for maturation of urease via the functional incorporation of the urease nickel metallocenter. This is Urease accessory protein UreD from Enterobacter sp. (strain 638).